Here is a 532-residue protein sequence, read N- to C-terminus: Bone morphogenetic protein receptor type-1A (532 aa).

The signal sequence occupies residues 1–23; the sequence is MPQLYIYIRLLGAYLFIISRVQG. Residues 24-152 lie on the Extracellular side of the membrane; the sequence is QNLDSMLHGT…IGPFFDGSIR (129 aa). Disulfide bonds link cysteine 61-cysteine 82, cysteine 63-cysteine 67, and cysteine 76-cysteine 100. An N-linked (GlcNAc...) asparagine glycan is attached at asparagine 73. Residues 107–109 are mediates specificity for BMP ligand; the sequence is DFQ. 2 disulfides stabilise this stretch: cysteine 110-cysteine 124 and cysteine 125-cysteine 130. Residues 153 to 176 form a helical membrane-spanning segment; the sequence is WLVLLISMAVCIIAMIIFSSCFCY. Over 177-532 the chain is Cytoplasmic; that stretch reads KHYCKSISSR…KMVESQDVKI (356 aa). Residues 204–233 enclose the GS domain; the sequence is ESLKDLIDQSQSSGSGSGLPLLVQRTIAKQ. A Protein kinase domain is found at 234-525; that stretch reads IQMVRQVGKG…RIKKTLAKMV (292 aa). Residues 240 to 248 and lysine 261 contribute to the ATP site; that span reads VGKGRYGEV. The active-site Proton acceptor is aspartate 362.

The protein belongs to the protein kinase superfamily. TKL Ser/Thr protein kinase family. TGFB receptor subfamily. As to quaternary structure, interacts with low affinity with GDF5; positively regulates chondrocyte differentiation. Interacts with BMP4. Interacts with SCUBE3. Interacts with TSC22D1/TSC-22. Interacts with BMP2; the interaction may induce HAMP expression. Interacts with BMP6. Interacts with heterodimers composed of BMP2 and BMP6 in vitro; the interaction may induce HAMP expression. Interacts with TGFBR3. Mg(2+) is required as a cofactor. It depends on Mn(2+) as a cofactor. In terms of processing, glycosylated. As to expression, highly expressed in skeletal muscle.

The protein localises to the cell membrane. It is found in the cell surface. It carries out the reaction L-threonyl-[receptor-protein] + ATP = O-phospho-L-threonyl-[receptor-protein] + ADP + H(+). The enzyme catalyses L-seryl-[receptor-protein] + ATP = O-phospho-L-seryl-[receptor-protein] + ADP + H(+). In terms of biological role, on ligand binding, forms a receptor complex consisting of two type II and two type I transmembrane serine/threonine kinases. Type II receptors phosphorylate and activate type I receptors which autophosphorylate, then bind and activate SMAD transcriptional regulators. Receptor for BMP2, BMP4, GDF5 and GDF6. Positively regulates chondrocyte differentiation through GDF5 interaction. Mediates induction of adipogenesis by GDF6. May promote the expression of HAMP, potentially via its interaction with BMP2. In Homo sapiens (Human), this protein is Bone morphogenetic protein receptor type-1A (BMPR1A).